Reading from the N-terminus, the 188-residue chain is Small ribosomal subunit protein eS8 (188 aa).

The segment at 1 to 34 (MGISRDSRHKRRLTGGRYPVHKKKRKYELGRPSS) is disordered. The segment covering 7–26 (SRHKRRLTGGRYPVHKKKRK) has biased composition (basic residues).

This sequence belongs to the eukaryotic ribosomal protein eS8 family.

This is Small ribosomal subunit protein eS8 (RPS8) from Theileria parva (East coast fever infection agent).